Here is a 904-residue protein sequence, read N- to C-terminus: Essential for maintenance of the cell wall protein 1 (904 aa).

TPR repeat units follow at residues Trp-510–Leu-544, Ile-563–Val-596, Ala-603–Ser-636, Phe-637–His-670, Ala-671–Lys-704, and Trp-706–Lys-739.

Belongs to the TTC27 family.

The protein resides in the cytoplasm. Its subcellular location is the nucleus. In terms of biological role, required for the maintenance of the cell wall integrity. The chain is Essential for maintenance of the cell wall protein 1 (EMW1) from Saccharomyces cerevisiae (strain ATCC 204508 / S288c) (Baker's yeast).